A 721-amino-acid chain; its full sequence is Mitogen-activated protein kinase 6 (721 aa).

Met1 is covalently cross-linked (Peptide (Met-Gly) (interchain with G-Cter in ubiquitin)). One can recognise a Protein kinase domain in the interval 20–316 (YMDLKPLGCG…AEEALSHPYM (297 aa)). ATP contacts are provided by residues 26–34 (LGCGGNGLV) and Lys49. The Proton acceptor role is filled by Asp152. At Ser189 the chain carries Phosphoserine; by PAK1, PAK2 and PAK3. The short motif at 189-191 (SEG) is the SEG motif element. The FRIEDE motif motif lies at 332-337 (FHIEDE). Phosphoserine is present on residues Ser386, Ser452, Ser556, Ser558, Ser665, and Ser684. The segment covering 701–715 (AMKSSPQIPHQTYSS) has biased composition (polar residues). Positions 701–721 (AMKSSPQIPHQTYSSILKHLN) are disordered.

Belongs to the protein kinase superfamily. CMGC Ser/Thr protein kinase family. MAP kinase subfamily. As to quaternary structure, heterodimer with ERK4/MAPK4. Interacts with (via FRIEDE motif) MAPKAPK5. Interacts with UBE3A; this interaction may be indirect and mediated by HERC2, possibly via HERC2 interaction with NEURL4. Mg(2+) serves as cofactor. Phosphorylated at Ser-189 by PAK1, PAK2 and PAK3 resulting in catalytic activation. Phosphorylated by MAPKAPK5 at other sites. In terms of processing, ubiquitination at Met-1 leads to degradation by the proteasome pathway.

It localises to the cytoplasm. It is found in the nucleus. The enzyme catalyses L-seryl-[protein] + ATP = O-phospho-L-seryl-[protein] + ADP + H(+). The catalysed reaction is L-threonyl-[protein] + ATP = O-phospho-L-threonyl-[protein] + ADP + H(+). Its activity is regulated as follows. Activated by phosphorylation at Ser-189. Atypical MAPK protein. Phosphorylates microtubule-associated protein 2 (MAP2) and MAPKAPK5. The precise role of the complex formed with MAPKAPK5 is still unclear, but the complex follows a complex set of phosphorylation events: upon interaction with atypical MAPKAPK5, ERK3/MAPK6 is phosphorylated at Ser-189 and then mediates phosphorylation and activation of MAPKAPK5, which in turn phosphorylates ERK3/MAPK6. May promote entry in the cell cycle. In Pongo abelii (Sumatran orangutan), this protein is Mitogen-activated protein kinase 6 (MAPK6).